Here is a 485-residue protein sequence, read N- to C-terminus: Protein DETOXIFICATION 14 (485 aa).

Transmembrane regions (helical) follow at residues 30-50, 68-88, 112-132, 147-167, 175-195, 207-227, 259-279, 288-308, 329-349, 372-392, 405-425, and 432-452; these read LSYI…LQVI, IAVS…ASAL, IVSL…IGDI, GKFA…QPLV, LILP…VLCW, GAAI…GLYM, ASMI…SGIL, VLSV…SLGA, AVYT…AIVF, MAPL…LSGV, VNLA…AFGF, and LWIG…LIVI.

This sequence belongs to the multi antimicrobial extrusion (MATE) (TC 2.A.66.1) family.

The protein localises to the membrane. The chain is Protein DETOXIFICATION 14 from Arabidopsis thaliana (Mouse-ear cress).